The sequence spans 1023 residues: GATOR2 complex protein WDR24 (1023 aa).

WD repeat units follow at residues 16–54 (NLGSPLSAISSSPDSTKLIVAGRDIVKIVSVQNNEFKVT), 64–108 (SLNY…SKSV), 114–154 (DHSR…NASK), 159–199 (PKSE…IAVE), 203–243 (SHQG…SLNN), 245–287 (STIS…IPLF), and 291–329 (DHRDVPTGLIWKSPSSLISCSKDSHLLLNEFQDSYKPYQ). Low complexity predominate over residues 563 to 578 (SKNIIDNSNDSNQEIN). Disordered stretches follow at residues 563–621 (SKNI…EPPS) and 661–824 (QKST…SIEN). Over residues 584-593 (KEDEEEDDDN) the composition is skewed to acidic residues. Residues 661–681 (QKSTDNISDNNSNVHVNIKRQ) are compositionally biased toward polar residues. Residues 682–695 (NQPTNNNNNNSNID) are compositionally biased toward low complexity. Residues 696-742 (NLEKKSNKSKSTKENKESSLTDQNKQKRNDNKEKIDNNEIDNDNKDN) show a composition bias toward basic and acidic residues. Residues 743 to 759 (NDDDDNDVDNIGEDNDE) are compositionally biased toward acidic residues. A compositionally biased stretch (low complexity) spans 760-812 (INNNNDNNNNNNNNNNNNNNNNNNNNNNNNNNNNNNNNKNNNNDNNNNNNINN). Residues 947-969 (ACSSCGKSIPQNSIICEKCNKAS) form a C4-type zinc finger. Cys-948, Cys-951, Cys-962, Cys-965, Cys-972, Cys-975, Cys-986, Cys-989, His-991, His-994, His-997, Cys-1010, Cys-1014, His-1016, and Cys-1018 together coordinate Zn(2+). The RING-type; atypical zinc finger occupies 970 to 1021 (SKCSICRLPVKGMWVWCQGCGHGGHLEHMKSWFIDKNQKSCPTGCTHICTPF).

This sequence belongs to the WD repeat WDR24 family. In terms of assembly, probably part of the GATOR complex.

The protein localises to the lysosome membrane. The enzyme catalyses S-ubiquitinyl-[E2 ubiquitin-conjugating enzyme]-L-cysteine + [acceptor protein]-L-lysine = [E2 ubiquitin-conjugating enzyme]-L-cysteine + N(6)-ubiquitinyl-[acceptor protein]-L-lysine.. It functions in the pathway protein modification; protein ubiquitination. Its function is as follows. As a component of the GATOR complex may function in the amino acid-sensing branch of the TORC1 signaling pathway. In Dictyostelium discoideum (Social amoeba), this protein is GATOR2 complex protein WDR24.